The primary structure comprises 127 residues: Large ribosomal subunit protein bL12 (127 aa).

This sequence belongs to the bacterial ribosomal protein bL12 family. Homodimer. Part of the ribosomal stalk of the 50S ribosomal subunit. Forms a multimeric L10(L12)X complex, where L10 forms an elongated spine to which 2 to 4 L12 dimers bind in a sequential fashion. Binds GTP-bound translation factors.

In terms of biological role, forms part of the ribosomal stalk which helps the ribosome interact with GTP-bound translation factors. Is thus essential for accurate translation. In Streptomyces griseus subsp. griseus (strain JCM 4626 / CBS 651.72 / NBRC 13350 / KCC S-0626 / ISP 5235), this protein is Large ribosomal subunit protein bL12.